Here is a 572-residue protein sequence, read N- to C-terminus: Urease subunit alpha (572 aa).

The 439-residue stretch at 134–572 (GGIDAHVHFI…LPMAQRYFLF (439 aa)) folds into the Urease domain. Residues His-139, His-141, and Lys-222 each contribute to the Ni(2+) site. Lys-222 bears the N6-carboxylysine mark. His-224 contributes to the substrate binding site. Ni(2+)-binding residues include His-251 and His-277. Residue His-325 is the Proton donor of the active site. Asp-365 contacts Ni(2+).

Belongs to the metallo-dependent hydrolases superfamily. Urease alpha subunit family. As to quaternary structure, heterotrimer of UreA (gamma), UreB (beta) and UreC (alpha) subunits. Three heterotrimers associate to form the active enzyme. Ni cation is required as a cofactor. In terms of processing, carboxylation allows a single lysine to coordinate two nickel ions.

The protein localises to the cytoplasm. It carries out the reaction urea + 2 H2O + H(+) = hydrogencarbonate + 2 NH4(+). The protein operates within nitrogen metabolism; urea degradation; CO(2) and NH(3) from urea (urease route): step 1/1. In Synechococcus sp. (strain JA-2-3B'a(2-13)) (Cyanobacteria bacterium Yellowstone B-Prime), this protein is Urease subunit alpha.